The primary structure comprises 875 residues: MTDIDVRLREDVHVLGELLGETIRQQHGDAFLQKIEDIRHSAKADRRGPGEQLSSTLADLAEDDLLPVARAFNQFLNLANMAEQYQLIRRRDADQPEPFEARVLPELLARLKQAGHSNDALARQLAKLDIQLVLTAHPTEVARRTLIQKYDAIAGQLAAQDHRDLSPAERQQVRERLRRLIAEAWHTEEIRRTRPTPVDEAKWGFAVIEHSLWHAIPSHLRKVDKALLEATGLRLPLEAAPIRFASWMGGDRDGNPNVTAAVTREVLLLARWMAADLFLRDIDALAAELSMQQANDALRERVGDSAEPYRAVLKQLRDRLRATRAWAHSALASNQPAGAEVLVDNRDLIAPLELCYQSLHDCGMGVIAEGPLLDCLRRAVTFGLFLGRLDVRQDAARHRDALTEITDYLGLGRYADWDEEQRIGFLQAELKNRRPLLPAHFKPQADTAEVLATCREVAAAPAASLGSYVISMAGAASDVLAVQLLLKEAGLTRPMRVVPLFETLADLDNAGPVMQRLLGLPGYRAGLRGPQEVMIGYSDSAKDAGTTAAAWAQYRAQENLVRICAEHQVELLLFHGRGGTVGRGGGPAHAAILSQPPGSVAGRFRTTEQGEMIRFKFGLPGIAEQNLNLYLAAVLEATLLPPPPPQPAWRELMDQLAADGVKAYRSVVRENPDFVEYFRQSTPEQELGRLPLGSRPAKRRAGGIESLRAIPWIFGWTQTRLMLPAWLGWETALSNALARGQGELLAQMREQWPFFRTRIDMLEMVLAKADAQIAEAYDERLVQPHLLPLGAHLRDLLSQSCQVVLGLTGQPVLLAHSPETLEFISLRNTYLDPLHRLQAELLARSRSREAALDSPLEQALLVTVAGIAAGLRNTG.

Catalysis depends on residues His137 and Lys542.

This sequence belongs to the PEPCase type 1 family. Mg(2+) serves as cofactor.

It carries out the reaction oxaloacetate + phosphate = phosphoenolpyruvate + hydrogencarbonate. Its function is as follows. Forms oxaloacetate, a four-carbon dicarboxylic acid source for the tricarboxylic acid cycle. This chain is Phosphoenolpyruvate carboxylase, found in Pseudomonas putida (strain GB-1).